Here is an 85-residue protein sequence, read N- to C-terminus: UPF0297 protein CPR_1749 (85 aa).

It belongs to the UPF0297 family.

This chain is UPF0297 protein CPR_1749, found in Clostridium perfringens (strain SM101 / Type A).